Reading from the N-terminus, the 472-residue chain is Glutamate--tRNA ligase (472 aa).

The short motif at 10–20 (PSPTGYLHVGG) is the 'HIGH' region element. Zn(2+) contacts are provided by Cys99, Cys101, Cys126, and Asp128. The short motif at 238 to 242 (KLSKR) is the 'KMSKS' region element. Lys241 lines the ATP pocket.

This sequence belongs to the class-I aminoacyl-tRNA synthetase family. Glutamate--tRNA ligase type 1 subfamily. As to quaternary structure, monomer. Requires Zn(2+) as cofactor.

The protein localises to the cytoplasm. The catalysed reaction is tRNA(Glu) + L-glutamate + ATP = L-glutamyl-tRNA(Glu) + AMP + diphosphate. Catalyzes the attachment of glutamate to tRNA(Glu) in a two-step reaction: glutamate is first activated by ATP to form Glu-AMP and then transferred to the acceptor end of tRNA(Glu). The protein is Glutamate--tRNA ligase of Photorhabdus laumondii subsp. laumondii (strain DSM 15139 / CIP 105565 / TT01) (Photorhabdus luminescens subsp. laumondii).